The primary structure comprises 234 residues: HTH-type transcriptional repressor FabR (234 aa).

The region spanning Lys29–Leu89 is the HTH tetR-type domain. A DNA-binding region (H-T-H motif) is located at residues Ser52 to Phe71.

In terms of assembly, homodimer.

Its subcellular location is the cytoplasm. With respect to regulation, has been suggested to require either an unsaturated acyl carrier protein or unsaturated acyl-CoA (but not their saturated equivalents) for DNA-binding. Another group suggests that unsaturated thioesters are not essential but act instead to enhance DNA-binding. Binds the promoter region of at least fabA and fabB, but probably not yqfA. Represses the transcription of fabA and fabB, involved in unsaturated fatty acid (UFA) biosynthesis. By controlling UFA production, FabR directly influences the physical properties of the membrane bilayer. The chain is HTH-type transcriptional repressor FabR from Escherichia coli (strain K12).